We begin with the raw amino-acid sequence, 454 residues long: Transmembrane GTPase fzo (454 aa).

The 111-residue stretch at 1–111 (SSMEPEMEQK…NQLKSTLISP (111 aa)) folds into the Dynamin-type G domain. The Cytoplasmic segment spans residues 1–322 (SSMEPEMEQK…QMLESLVKSK (322 aa)). The segment at 30–33 (YSTA) is G5 motif. Serine 44 contacts GTP. Residues 112–162 (FIEKVSRLIDENKERRANLNAEIEEWELEMQDEREDLQYCFEELTEMTQRL) adopt a coiled-coil conformation. The helical transmembrane segment at 323-335 (GSLGTVLLGAMAI) threads the bilayer. The Mitochondrial intermembrane segment spans residues 336-338 (RSF). Residues 339–361 (NWPIVMILGGLVGSFYMYEYAAW) form a helical membrane-spanning segment. Topologically, residues 362–454 (TTAAQERSFK…DKGQLLASRL (93 aa)) are cytoplasmic. The stretch at 411–434 (QSNETLNDLNVRTAELTKQIQSME) forms a coiled coil.

This sequence belongs to the TRAFAC class dynamin-like GTPase superfamily. Dynamin/Fzo/YdjA family. Mitofusin subfamily.

The protein localises to the mitochondrion outer membrane. The enzyme catalyses GTP + H2O = GDP + phosphate + H(+). Functionally, essential transmembrane GTPase, which mediates mitochondrial fusion during spermatogenesis. In early spermatocytes, fusion of mitochondria give rise to two organelles named Nebenkern and constitutes an important step in mitochondria morphology, which is balanced between fusion and fission. Essential for fertility. The chain is Transmembrane GTPase fzo (fzo) from Drosophila simulans (Fruit fly).